We begin with the raw amino-acid sequence, 85 residues long: Putative membrane protein insertion efficiency factor (85 aa).

It belongs to the UPF0161 family.

It is found in the cell inner membrane. Could be involved in insertion of integral membrane proteins into the membrane. The protein is Putative membrane protein insertion efficiency factor of Escherichia coli O6:H1 (strain CFT073 / ATCC 700928 / UPEC).